The following is a 380-amino-acid chain: Peptide chain release factor 1-like, mitochondrial (380 aa).

The transit peptide at 1-26 (MRSRVLWGAARWLWPRRAVGPARRPL) directs the protein to the mitochondrion. The stretch at 63-117 (ELLAVIKLLNEKERELRETEHLLHDENEDLRKLAENEITLCQKEITQLKHQIILL) forms a coiled coil. The tract at residues 236–300 (PKDLRIDTKR…LRAKLYSMHL (65 aa)) is GGQ domain. The short motif at 250-252 (GGQ) is the GGQ element. Position 252 is an N5-methylglutamine (glutamine 252).

This sequence belongs to the prokaryotic/mitochondrial release factor family. Methylation of glutamine in the GGQ triplet by HEMK1 is conserved from bacteria to mammals. In terms of tissue distribution, expressed in skeletal muscle (at protein level).

It localises to the mitochondrion. In terms of biological role, mitochondrial peptide chain release factor that directs the termination of translation in response to the peptide chain termination codons UAA and UAG. The protein is Peptide chain release factor 1-like, mitochondrial of Homo sapiens (Human).